We begin with the raw amino-acid sequence, 277 residues long: 3-methyl-2-oxobutanoate hydroxymethyltransferase (277 aa).

Mg(2+)-binding residues include aspartate 42 and aspartate 81. 3-methyl-2-oxobutanoate contacts are provided by residues aspartate 42–serine 43, aspartate 81, and lysine 110. Glutamate 112 provides a ligand contact to Mg(2+). Glutamate 179 functions as the Proton acceptor in the catalytic mechanism.

It belongs to the PanB family. Homodecamer; pentamer of dimers. It depends on Mg(2+) as a cofactor.

The protein localises to the cytoplasm. The catalysed reaction is 3-methyl-2-oxobutanoate + (6R)-5,10-methylene-5,6,7,8-tetrahydrofolate + H2O = 2-dehydropantoate + (6S)-5,6,7,8-tetrahydrofolate. It functions in the pathway cofactor biosynthesis; (R)-pantothenate biosynthesis; (R)-pantoate from 3-methyl-2-oxobutanoate: step 1/2. Functionally, catalyzes the reversible reaction in which hydroxymethyl group from 5,10-methylenetetrahydrofolate is transferred onto alpha-ketoisovalerate to form ketopantoate. The sequence is that of 3-methyl-2-oxobutanoate hydroxymethyltransferase from Anaplasma marginale (strain Florida).